The chain runs to 491 residues: MKSIMVVGTTSHAGKSLISTAICRILSRRGWRVAPFKGQNMALNAYVTANGGEIGYAQAVQAWAAGVVPWVEMNPILLKPQGDMTSQVIIRGRPVGRVNAADYYEQYFEPGWRAIEESLQHLGTEFDLVVCEGAGSPAEINLKHRDLTNMRVAKYLNAPTLLVVDIDRGGAFAHVVGTLELLEPEERQLIKGVVINKFRGQRSLLDPGIKWLEERTGIPVVGVIPYLQEIFPAEDSLDLLERKTHKAHADLQITVVRLPRIANFTDFDPLESEPTVAVKYISPKQDLGHPDAVILPGTKTTIADLILLQKTGMAEAIQNYAASGGTVLGICGGYQILGQMIADPEGIEGQAGRYQGLNLLPIRTVITGQKIARQRQVSSNFPQLGLPVNGFEIHQGRSRVEPQGDSQAFQPLFDDVNLGLVDSCQSVWGSYLHGLFDNGPWRRAWLNRLRQQRGLKSLPTGVANYREQREQMLDNIATEVENHLDLTLFLP.

The GATase cobBQ-type domain maps to 250–441; the sequence is DLQITVVRLP…LHGLFDNGPW (192 aa). Cys331 functions as the Nucleophile in the catalytic mechanism. The active site involves His433.

Belongs to the CobB/CobQ family. CobQ subfamily.

It functions in the pathway cofactor biosynthesis; adenosylcobalamin biosynthesis. Its function is as follows. Catalyzes amidations at positions B, D, E, and G on adenosylcobyrinic A,C-diamide. NH(2) groups are provided by glutamine, and one molecule of ATP is hydrogenolyzed for each amidation. The protein is Cobyric acid synthase of Trichormus variabilis (strain ATCC 29413 / PCC 7937) (Anabaena variabilis).